The chain runs to 206 residues: Dephospho-CoA kinase (206 aa).

Residues 4–204 (VIGLTGGIAS…EGYIESHSED (201 aa)) form the DPCK domain. 12-17 (ASGKST) contributes to the ATP binding site.

It belongs to the CoaE family.

It localises to the cytoplasm. It carries out the reaction 3'-dephospho-CoA + ATP = ADP + CoA + H(+). The protein operates within cofactor biosynthesis; coenzyme A biosynthesis; CoA from (R)-pantothenate: step 5/5. Catalyzes the phosphorylation of the 3'-hydroxyl group of dephosphocoenzyme A to form coenzyme A. This Staphylococcus saprophyticus subsp. saprophyticus (strain ATCC 15305 / DSM 20229 / NCIMB 8711 / NCTC 7292 / S-41) protein is Dephospho-CoA kinase.